Consider the following 181-residue polypeptide: Ribulose bisphosphate carboxylase small subunit, chloroplastic (181 aa).

Residues 1–54 (MASSMLSSAAVVTSQLQATMVAPFTGLKSSAAFPVTRKTNTDITSIASNGGRVS) constitute a chloroplast transit peptide.

This sequence belongs to the RuBisCO small chain family. Heterohexadecamer of 8 large and 8 small subunits.

The protein resides in the plastid. Its subcellular location is the chloroplast. Functionally, ruBisCO catalyzes two reactions: the carboxylation of D-ribulose 1,5-bisphosphate, the primary event in carbon dioxide fixation, as well as the oxidative fragmentation of the pentose substrate. Both reactions occur simultaneously and in competition at the same active site. Although the small subunit is not catalytic it is essential for maximal activity. The sequence is that of Ribulose bisphosphate carboxylase small subunit, chloroplastic from Raphanus sativus (Radish).